The sequence spans 267 residues: Kit ligand (267 aa).

A signal peptide spans 1–25 (MKKTQTWIITCIYLQLLLFNPLVHT). Gln26 bears the Pyrrolidone carboxylic acid mark. Topologically, residues 26–215 (QGICRNRVTD…SNSIEDSSLQ (190 aa)) are extracellular. 2 disulfides stabilise this stretch: Cys29-Cys114 and Cys68-Cys164. 4 N-linked (GlcNAc...) asparagine glycosylation sites follow: Asn90, Asn97, Asn145, and Asn196. A helical transmembrane segment spans residues 216 to 238 (WAAVALPAFFSLVIGFAFGALYW). The Cytoplasmic segment spans residues 239–267 (KKKQPNLTRTVENRQINEEDNEISMLQEK).

It belongs to the SCF family. Homodimer, non-covalently linked. Heterotetramer with KIT, binding two KIT molecules; thereby mediates KIT dimerization and subsequent activation by autophosphorylation. Post-translationally, a soluble form is produced by proteolytic processing of the extracellular domain.

Its subcellular location is the cytoplasm. The protein resides in the cytoskeleton. It localises to the cell membrane. It is found in the cell projection. The protein localises to the lamellipodium. Its subcellular location is the filopodium. The protein resides in the secreted. In terms of biological role, ligand for the receptor-type protein-tyrosine kinase KIT. Plays an essential role in the regulation of cell survival and proliferation, hematopoiesis, stem cell maintenance, gametogenesis, mast cell development, migration and function, and in melanogenesis. KITLG/SCF binding can activate several signaling pathways. Promotes phosphorylation of PIK3R1, the regulatory subunit of phosphatidylinositol 3-kinase, and subsequent activation of the kinase AKT1. KITLG/SCF and KIT also transmit signals via GRB2 and activation of RAS, RAF1 and the MAP kinases MAPK1/ERK2 and/or MAPK3/ERK1. KITLG/SCF and KIT promote activation of STAT family members STAT1, STAT3 and STAT5. KITLG/SCF and KIT promote activation of PLCG1, leading to the production of the cellular signaling molecules diacylglycerol and inositol 1,4,5-trisphosphate. KITLG/SCF acts synergistically with other cytokines, probably interleukins. In Ovis aries (Sheep), this protein is Kit ligand (KITLG).